We begin with the raw amino-acid sequence, 462 residues long: Anthranilate synthase component 1 (462 aa).

Residues Ser46 and 243–245 (PHM) contribute to the L-tryptophan site. 278 to 279 (GT) provides a ligand contact to chorismate. Glu305 contacts Mg(2+). Residues Tyr394, Arg414, 428–430 (SGG), and Gly430 contribute to the chorismate site. Glu444 is a Mg(2+) binding site.

This sequence belongs to the anthranilate synthase component I family. In terms of assembly, heterotetramer consisting of two non-identical subunits: a beta subunit (TrpG) and a large alpha subunit (TrpE). Mg(2+) serves as cofactor.

The catalysed reaction is chorismate + L-glutamine = anthranilate + pyruvate + L-glutamate + H(+). The protein operates within amino-acid biosynthesis; L-tryptophan biosynthesis; L-tryptophan from chorismate: step 1/5. Its activity is regulated as follows. Feedback inhibited by tryptophan. Its function is as follows. Part of a heterotetrameric complex that catalyzes the two-step biosynthesis of anthranilate, an intermediate in the biosynthesis of L-tryptophan. In the first step, the glutamine-binding beta subunit (TrpG) of anthranilate synthase (AS) provides the glutamine amidotransferase activity which generates ammonia as a substrate that, along with chorismate, is used in the second step, catalyzed by the large alpha subunit of AS (TrpE) to produce anthranilate. In the absence of TrpG, TrpE can synthesize anthranilate directly from chorismate and high concentrations of ammonia. This is Anthranilate synthase component 1 (trpE) from Leptospira biflexa.